The following is a 1341-amino-acid chain: DNA-directed RNA polymerase subunit Rpo1N (1341 aa).

Zn(2+)-binding residues include cysteine 62, cysteine 65, cysteine 72, histidine 75, cysteine 102, cysteine 105, cysteine 149, and cysteine 152. 3 residues coordinate Mg(2+): aspartate 918, aspartate 920, and aspartate 922.

This sequence belongs to the RNA polymerase beta' chain family. Part of the RNA polymerase complex. Mg(2+) serves as cofactor. Requires Zn(2+) as cofactor. This protein undergoes a protein self splicing that involves a post-translational excision of the intervening region (intein) followed by peptide ligation.

Its subcellular location is the cytoplasm. The catalysed reaction is RNA(n) + a ribonucleoside 5'-triphosphate = RNA(n+1) + diphosphate. DNA-dependent RNA polymerase (RNAP) catalyzes the transcription of DNA into RNA using the four ribonucleoside triphosphates as substrates. Forms the clamp head domain. This chain is DNA-directed RNA polymerase subunit Rpo1N, found in Methanocaldococcus jannaschii (strain ATCC 43067 / DSM 2661 / JAL-1 / JCM 10045 / NBRC 100440) (Methanococcus jannaschii).